The sequence spans 318 residues: tRNA dimethylallyltransferase (318 aa).

Residue 16–23 (GPTASGKS) participates in ATP binding. 18-23 (TASGKS) serves as a coordination point for substrate. Interaction with substrate tRNA regions lie at residues 41-44 (DSRQ) and 165-169 (QRLIR).

This sequence belongs to the IPP transferase family. As to quaternary structure, monomer. Mg(2+) serves as cofactor.

The catalysed reaction is adenosine(37) in tRNA + dimethylallyl diphosphate = N(6)-dimethylallyladenosine(37) in tRNA + diphosphate. Its function is as follows. Catalyzes the transfer of a dimethylallyl group onto the adenine at position 37 in tRNAs that read codons beginning with uridine, leading to the formation of N6-(dimethylallyl)adenosine (i(6)A). In Pelodictyon phaeoclathratiforme (strain DSM 5477 / BU-1), this protein is tRNA dimethylallyltransferase.